The primary structure comprises 122 residues: Holo-[acyl-carrier-protein] synthase (122 aa).

Residues D8 and E57 each coordinate Mg(2+).

The protein belongs to the P-Pant transferase superfamily. AcpS family. The cofactor is Mg(2+).

It localises to the cytoplasm. The enzyme catalyses apo-[ACP] + CoA = holo-[ACP] + adenosine 3',5'-bisphosphate + H(+). Transfers the 4'-phosphopantetheine moiety from coenzyme A to a Ser of acyl-carrier-protein. The protein is Holo-[acyl-carrier-protein] synthase of Protochlamydia amoebophila (strain UWE25).